A 264-amino-acid chain; its full sequence is MSFTVLIPARLGSSRLPDKPLADIAGLPMVVHVARRALASGAAVVVVAADDTRTVEACARHGVRALLTRRDHATGSDRLAEACDLLALPDSEIVVNVQGDEPLIDPALIDACARLLAERPECVMGTAAHAIDTVAEFENPNVVKVVCDALGRALSFSRAPMPWWRDGYAAGLRQATALSDPPPLRHIGLYAYRAGFLRRYPKLAPSPIETIESLEQLRVLWHGERIAVHVSPLRPGPGVDTPDDLARVRALLHDTGQEPPRESG.

The protein belongs to the KdsB family.

Its subcellular location is the cytoplasm. The enzyme catalyses 3-deoxy-alpha-D-manno-oct-2-ulosonate + CTP = CMP-3-deoxy-beta-D-manno-octulosonate + diphosphate. Its pathway is nucleotide-sugar biosynthesis; CMP-3-deoxy-D-manno-octulosonate biosynthesis; CMP-3-deoxy-D-manno-octulosonate from 3-deoxy-D-manno-octulosonate and CTP: step 1/1. The protein operates within bacterial outer membrane biogenesis; lipopolysaccharide biosynthesis. In terms of biological role, activates KDO (a required 8-carbon sugar) for incorporation into bacterial lipopolysaccharide in Gram-negative bacteria. In Methylibium petroleiphilum (strain ATCC BAA-1232 / LMG 22953 / PM1), this protein is 3-deoxy-manno-octulosonate cytidylyltransferase.